The following is a 344-amino-acid chain: D-beta-hydroxybutyrate dehydrogenase, mitochondrial (344 aa).

A mitochondrion-targeting transit peptide spans 1-46; sequence MLTARLSRPLSQLPRKTLNFSDRENGTRGSLLLYSAPFVPVGRRTY. 59–83 is a binding site for NAD(+); the sequence is LITGCDSGFGFSLAKHLHSEGFLVF. An N6-acetyllysine mark is found at K73 and K97. K103 is subject to N6-acetyllysine; alternate. Residue K103 is modified to N6-succinyllysine; alternate. Position 177 is an N6-acetyllysine (K177). Residue S195 participates in substrate binding. Y208 acts as the Proton acceptor in catalysis. K212 is subject to N6-acetyllysine. S219 is a glycosylation site (O-linked (GlcNAc) serine). S246 bears the Phosphoserine mark. The residue at position 260 (K260) is an N6-acetyllysine; alternate. The residue at position 260 (K260) is an N6-succinyllysine; alternate. The residue at position 281 (K281) is an N6-acetyllysine.

This sequence belongs to the short-chain dehydrogenases/reductases (SDR) family. Homotetramer.

It localises to the mitochondrion inner membrane. Its subcellular location is the mitochondrion matrix. The enzyme catalyses (R)-3-hydroxybutanoate + NAD(+) = acetoacetate + NADH + H(+). Its activity is regulated as follows. Requires phosphatidylcholine as an allosteric activator for enzymatic activity. The sequence is that of D-beta-hydroxybutyrate dehydrogenase, mitochondrial from Bos taurus (Bovine).